The primary structure comprises 374 residues: Succinyl-diaminopimelate desuccinylase (374 aa).

Residue His-66 participates in Zn(2+) binding. Residue Asp-68 is part of the active site. Residue Asp-99 participates in Zn(2+) binding. The active-site Proton acceptor is Glu-133. Residues Glu-134, Glu-162, and His-348 each coordinate Zn(2+).

It belongs to the peptidase M20A family. DapE subfamily. Homodimer. Zn(2+) serves as cofactor. Requires Co(2+) as cofactor.

It catalyses the reaction N-succinyl-(2S,6S)-2,6-diaminopimelate + H2O = (2S,6S)-2,6-diaminopimelate + succinate. It participates in amino-acid biosynthesis; L-lysine biosynthesis via DAP pathway; LL-2,6-diaminopimelate from (S)-tetrahydrodipicolinate (succinylase route): step 3/3. Its function is as follows. Catalyzes the hydrolysis of N-succinyl-L,L-diaminopimelic acid (SDAP), forming succinate and LL-2,6-diaminopimelate (DAP), an intermediate involved in the bacterial biosynthesis of lysine and meso-diaminopimelic acid, an essential component of bacterial cell walls. The chain is Succinyl-diaminopimelate desuccinylase from Coxiella burnetii (strain CbuK_Q154) (Coxiella burnetii (strain Q154)).